The primary structure comprises 145 residues: ATP synthase epsilon chain (145 aa).

The interval 100-123 (RAQRAKQRAEDAIKTASEKHDSDE) is disordered. A compositionally biased stretch (basic and acidic residues) spans 106-123 (QRAEDAIKTASEKHDSDE).

The protein belongs to the ATPase epsilon chain family. In terms of assembly, F-type ATPases have 2 components, CF(1) - the catalytic core - and CF(0) - the membrane proton channel. CF(1) has five subunits: alpha(3), beta(3), gamma(1), delta(1), epsilon(1). CF(0) has three main subunits: a, b and c.

The protein localises to the cell membrane. Produces ATP from ADP in the presence of a proton gradient across the membrane. The sequence is that of ATP synthase epsilon chain from Latilactobacillus sakei subsp. sakei (strain 23K) (Lactobacillus sakei subsp. sakei).